Here is a 563-residue protein sequence, read N- to C-terminus: MSDFVDRVTVHVKGGDGGNGSAGIRREKYKPLAGPNGGNGGDGGSVVFVADRNATSLLDYRFMPHRVAGSGTMGLGDNKDGSKGEDLILPVPCGTVVFEARGEQGKAKHPGAQLADLRHEGDRCVVAQGGAGGLGNIALANKTRRAPGFALLGELGEERDVILELKSIADVALVGFPSAGKSSLIAAMSSVKPKIADYPFTTLVPNLGVVIAGDSRYTIADVPGLIPGASEGKGLGLEFLRHIERTEIIAHVIDCATLEPDRDPMSDYHALENELALYADKLELPLGAIPIPERPRIVILNKIDVPEAKELAEFVRPEFEKLGLKVFEISTASHEGLKELNFALSALVHEMREEVANREQAEEEARVVIKPLETKGRRPRRADEGGSALEFTVERRELGNGEVFFEVRGVKPERWVMQTNFDNDEAVGYLADRLAKLGVEDELRRKGAHPGDEVRIGRGARMVEFDWDPTISAGAEMLDGSNLGARGKDLRLEELDPRTHRRSNAERRAQYHEMMDARAAVRDAMMAERKAGHWADPTVDDDRHDETSLFGHGESSEDGETEE.

An Obg domain is found at 2 to 168 (SDFVDRVTVH…RDVILELKSI (167 aa)). The 181-residue stretch at 169–349 (ADVALVGFPS…LNFALSALVH (181 aa)) folds into the OBG-type G domain. Residues 175 to 182 (GFPSAGKS), 200 to 204 (FTTLV), 221 to 224 (DVPG), 301 to 304 (NKID), and 330 to 332 (STA) contribute to the GTP site. Mg(2+)-binding residues include Ser182 and Thr202. Residues 383 to 469 (DEGGSALEFT…ARMVEFDWDP (87 aa)) enclose the OCT domain. The tract at residues 529–563 (RKAGHWADPTVDDDRHDETSLFGHGESSEDGETEE) is disordered.

This sequence belongs to the TRAFAC class OBG-HflX-like GTPase superfamily. OBG GTPase family. In terms of assembly, monomer. Mg(2+) is required as a cofactor.

Its subcellular location is the cytoplasm. Its function is as follows. An essential GTPase which binds GTP, GDP and possibly (p)ppGpp with moderate affinity, with high nucleotide exchange rates and a fairly low GTP hydrolysis rate. Plays a role in control of the cell cycle, stress response, ribosome biogenesis and in those bacteria that undergo differentiation, in morphogenesis control. In Bifidobacterium longum (strain DJO10A), this protein is GTPase Obg.